The sequence spans 402 residues: uncharacterized protein (402 aa).

12 consecutive transmembrane segments (helical) span residues 23–43 (IVSV…PLAV), 52–72 (LGYG…ATLL), 90–110 (VLYG…SVAI), 121–141 (LLVG…AAIG), 158–178 (WNGI…VLLV), 180–200 (WLGL…GFAL), 228–248 (GMGL…ITLY), 255–275 (ANAV…RLLF), 282–302 (LGGF…LLLL), 309–329 (WVGL…FPAF), 351–371 (LFVD…ANLF), and 375–395 (SMFL…IALH).

This sequence belongs to the major facilitator superfamily. YhhS family.

Its subcellular location is the cell inner membrane. This is an uncharacterized protein from Pseudomonas aeruginosa (strain UCBPP-PA14).